The primary structure comprises 442 residues: Proline--tRNA ligase (442 aa).

The protein belongs to the class-II aminoacyl-tRNA synthetase family. ProS type 2 subfamily. In terms of assembly, homodimer.

It localises to the cytoplasm. The catalysed reaction is tRNA(Pro) + L-proline + ATP = L-prolyl-tRNA(Pro) + AMP + diphosphate. In terms of biological role, catalyzes the attachment of proline to tRNA(Pro) in a two-step reaction: proline is first activated by ATP to form Pro-AMP and then transferred to the acceptor end of tRNA(Pro). This is Proline--tRNA ligase from Brucella canis (strain ATCC 23365 / NCTC 10854 / RM-666).